The sequence spans 669 residues: Glutaminase kidney isoform, mitochondrial (669 aa).

A mitochondrion-targeting transit peptide spans 1-54 (MMRLRGSGMLRDLLLRSPAGVSATLRRAQPLVTLCRRPRGGGRPAAGPAAAARL). The segment at 68–118 (LARGLSSSPSEILQELGKGSTHPQPGVSPPAAPAAPGPKDGPGETDAFGNS) is disordered. Residues 93 to 103 (GVSPPAAPAAP) show a composition bias toward pro residues. Lys-130 and Lys-164 each carry N6-succinyllysine. Ser-286 is a binding site for substrate. At Lys-311 the chain carries N6-acetyllysine. Positions 315–322 (GLRFNKLF) are highly mobile activation loop. Asn-335, Glu-381, Asn-388, Tyr-414, Tyr-466, and Val-484 together coordinate substrate. ANK repeat units lie at residues 585-614 (DSRT…VNPF) and 619-648 (WNNT…QYTP). Residues 647–669 (TPQGDSDNGKENQTVHKNLDGLL) form a disordered region. At Ser-652 the chain carries Phosphoserine. A compositionally biased stretch (basic and acidic residues) spans 653 to 669 (DNGKENQTVHKNLDGLL).

Belongs to the glutaminase family. As to quaternary structure, homotetramer, dimer of dimers. The tetramers can assemble into rod-like oligomers (in vitro), but the physiological significance of this is not clear. Interacts with RAF1 and MAP2K2. Interacts with ATCAY; the interaction is direct and may control GLS localization, negatively regulating its activity. In terms of processing, synthesized as a 74-kDa cytosolic precursor which is proteolytically processed by the mitochondrial-processing peptidase (MPP) via a 72-kDa intermediate to yield the mature mitochondrial 68- and 65-kDa subunits. Isoform 1 and isoform 3 are detected in brain cortex. Isoform 3 is highly expressed in astrocytoma, ganglioglioma and ependymoma. Isoform 1 is highly expressed in brain and kidney, but not detected in liver. Isoform 3 is highly expressed in heart and pancreas, detected at lower levels in placenta, lung, pancreas and kidney, but is not detected in liver. Isoform 2 is expressed in cardiac and skeletal muscle.

The protein localises to the mitochondrion. It is found in the cytoplasm. Its subcellular location is the cytosol. It localises to the mitochondrion matrix. The enzyme catalyses L-glutamine + H2O = L-glutamate + NH4(+). Isoform 1 and isoform 3 are activated by phosphate. Inhibited by BPTES. BPTES binds between subunits and favors dissociation of the tetramer into dimers. Inhibited by 6-diazo-5-oxo-L-norleucine (DON). Enzyme activity is stimulated by phosphorylation. Its function is as follows. Catalyzes the first reaction in the primary pathway for the renal catabolism of glutamine. Plays a role in maintaining acid-base homeostasis. Regulates the levels of the neurotransmitter glutamate, the main excitatory neurotransmitter in the brain. Lacks catalytic activity. In Homo sapiens (Human), this protein is Glutaminase kidney isoform, mitochondrial (GLS).